The following is a 240-amino-acid chain: Small ribosomal subunit protein uS3 (240 aa).

Residues 39 to 109 enclose the KH type-2 domain; that stretch reads IRQHIDANLN…QIRINVVEVN (71 aa). The tract at residues 216 to 240 is disordered; sequence TSAANAAPLPRRKSRRQQFEDRSEQ.

This sequence belongs to the universal ribosomal protein uS3 family. In terms of assembly, part of the 30S ribosomal subunit. Forms a tight complex with proteins S10 and S14.

Its function is as follows. Binds the lower part of the 30S subunit head. Binds mRNA in the 70S ribosome, positioning it for translation. This chain is Small ribosomal subunit protein uS3, found in Picosynechococcus sp. (strain ATCC 27264 / PCC 7002 / PR-6) (Agmenellum quadruplicatum).